A 172-amino-acid polypeptide reads, in one-letter code: Lipopolysaccharide export system protein LptA (172 aa).

A signal peptide spans 1-23 (MKLVSNKILFLATMVLASSSAFA).

The protein belongs to the LptA family. As to quaternary structure, component of the lipopolysaccharide transport and assembly complex.

Its subcellular location is the periplasm. In terms of biological role, involved in the assembly of lipopolysaccharide (LPS). Required for the translocation of LPS from the inner membrane to the outer membrane. May form a bridge between the inner membrane and the outer membrane, via interactions with LptC and LptD, thereby facilitating LPS transfer across the periplasm. This chain is Lipopolysaccharide export system protein LptA, found in Haemophilus influenzae (strain ATCC 51907 / DSM 11121 / KW20 / Rd).